Consider the following 334-residue polypeptide: N-acetyl-gamma-glutamyl-phosphate reductase (334 aa).

Residue cysteine 154 is part of the active site.

The protein belongs to the NAGSA dehydrogenase family. Type 1 subfamily.

It localises to the cytoplasm. It catalyses the reaction N-acetyl-L-glutamate 5-semialdehyde + phosphate + NADP(+) = N-acetyl-L-glutamyl 5-phosphate + NADPH + H(+). It functions in the pathway amino-acid biosynthesis; L-arginine biosynthesis; N(2)-acetyl-L-ornithine from L-glutamate: step 3/4. In terms of biological role, catalyzes the NADPH-dependent reduction of N-acetyl-5-glutamyl phosphate to yield N-acetyl-L-glutamate 5-semialdehyde. The protein is N-acetyl-gamma-glutamyl-phosphate reductase of Shigella flexneri.